The following is a 163-amino-acid chain: Epithelial membrane protein 3 (163 aa).

Residues 4-24 (LLLVVSALHILILVLLFVATL) traverse the membrane as a helical segment. Residues Asn-46 and Asn-56 are each glycosylated (N-linked (GlcNAc...) asparagine). 3 helical membrane-spanning segments follow: residues 66-86 (VQALMVLSLILCCLSFILFMI), 100-120 (TGLCQLCTSAAVFSGALIYAI), and 139-159 (FALAWVAFPLALVSGIIYIHL).

The protein belongs to the PMP-22/EMP/MP20 family.

Its subcellular location is the membrane. Functionally, probably involved in cell proliferation and cell-cell interactions. The chain is Epithelial membrane protein 3 (Emp3) from Rattus norvegicus (Rat).